Here is a 147-residue protein sequence, read N- to C-terminus: Nucleoside diphosphate kinase (147 aa).

ATP-binding residues include K9, F57, R85, T91, R102, and N112. T91 carries the phosphothreonine modification. The Pros-phosphohistidine intermediate role is filled by H115. At S122 the chain carries Phosphoserine.

This sequence belongs to the NDK family. Homotetramer. The cofactor is Mg(2+).

The protein localises to the cytoplasm. It carries out the reaction a 2'-deoxyribonucleoside 5'-diphosphate + ATP = a 2'-deoxyribonucleoside 5'-triphosphate + ADP. The enzyme catalyses a ribonucleoside 5'-diphosphate + ATP = a ribonucleoside 5'-triphosphate + ADP. In terms of biological role, major role in the synthesis of nucleoside triphosphates other than ATP. The ATP gamma phosphate is transferred to the NDP beta phosphate via a ping-pong mechanism, using a phosphorylated active-site intermediate. The protein is Nucleoside diphosphate kinase of Halalkalibacterium halodurans (strain ATCC BAA-125 / DSM 18197 / FERM 7344 / JCM 9153 / C-125) (Bacillus halodurans).